A 196-amino-acid polypeptide reads, in one-letter code: FMN-dependent NADH:quinone oxidoreductase (196 aa).

FMN is bound by residues Ser-10 and 17-19 (SYS).

It belongs to the azoreductase type 1 family. As to quaternary structure, homodimer. It depends on FMN as a cofactor.

It carries out the reaction 2 a quinone + NADH + H(+) = 2 a 1,4-benzosemiquinone + NAD(+). The catalysed reaction is N,N-dimethyl-1,4-phenylenediamine + anthranilate + 2 NAD(+) = 2-(4-dimethylaminophenyl)diazenylbenzoate + 2 NADH + 2 H(+). Quinone reductase that provides resistance to thiol-specific stress caused by electrophilic quinones. Its function is as follows. Also exhibits azoreductase activity. Catalyzes the reductive cleavage of the azo bond in aromatic azo compounds to the corresponding amines. The chain is FMN-dependent NADH:quinone oxidoreductase from Metamycoplasma arthritidis (strain 158L3-1) (Mycoplasma arthritidis).